The following is a 468-amino-acid chain: Glutamate--tRNA ligase (468 aa).

The 'HIGH' region motif lies at P8–G18. Positions 97, 99, 124, and 126 each coordinate Zn(2+). The 'KMSKS' region signature appears at K236 to R240. Residue K239 participates in ATP binding.

The protein belongs to the class-I aminoacyl-tRNA synthetase family. Glutamate--tRNA ligase type 1 subfamily. As to quaternary structure, monomer. Zn(2+) is required as a cofactor.

Its subcellular location is the cytoplasm. The enzyme catalyses tRNA(Glu) + L-glutamate + ATP = L-glutamyl-tRNA(Glu) + AMP + diphosphate. Its function is as follows. Catalyzes the attachment of glutamate to tRNA(Glu) in a two-step reaction: glutamate is first activated by ATP to form Glu-AMP and then transferred to the acceptor end of tRNA(Glu). This chain is Glutamate--tRNA ligase, found in Francisella tularensis subsp. holarctica (strain FTNF002-00 / FTA).